A 75-amino-acid polypeptide reads, in one-letter code: Chaplin-D (75 aa).

The N-terminal stretch at 1–23 (MKKSAAVVAGAIMALGMAAPAFA) is a signal peptide. Residues 34-74 (SPGVLSGNVIQVPVHVPVNVCGNSINVVGLLNPAFGNKCEN) enclose the Chaplin domain. A disulfide bridge links cysteine 54 with cysteine 72.

The protein belongs to the chaplin family. Short chaplin subfamily.

It localises to the cell surface. Its subcellular location is the secreted. The protein resides in the cell wall. The protein localises to the fimbrium. Its function is as follows. One of 8 partially redundant surface-active proteins required for efficient formation of aerial mycelium; the short chaplins assemble into a hydrophobic, amyloidal fibrillar surface layer that envelopes and protects aerial hyphae and spores, presumably anchored to the long chaplins. Chaplins have an overlapping function with the surface-active SapB peptide; chaplins are essential on minimal medium while on rich medium both chaplins and SapB are required for efficient aerial hyphae formation. Chaplins are also involved in cell attachment to a hydrophobic surface. Forms amyloid fibrils in vitro probably composed of stacked beta-sheets, at low extracellular concentrations individually restores the ability to form aerial hyphae to a chaplin-deficient strain. A small chaplin extract (ChpD, ChpE, ChpF, ChpG and ChpH) self-assembles into 2 different amyloids; small fibrils at the air-water interface form an amphipathic membrane that resembles spore-surface structures involved in aerial hyphae formation, and hydrophilic fibrils in solution that resemble the fibers that attach cells to a hydrophobic surface. At the air-water interface the hydrophilic surface is in contact with water (probably equivalent to the peptidoglycan layer), while the hydrophobic face is exposed to the air, making the surface of the aerial hyphae hydrophobic. A minimal chaplin strain capable of forming aerial mycelium/hyphae on minimal medium contains ChpC, ChpE and ChpH. The strain also has restored rodlet formation on the hyphae surface. A second minimal chaplin strain with ChpA, ChpD and ChpE makes slightly less robust hyphae. A small chaplin extract applied to a chaplin-deficient strain restores aerial hyphae formation. The small chaplin extract forms an amyloid-like structure similar to that seen on the surface of cells without rodlets (rdlA-rdlB deletions), and is highly surface active, reducing surface tension from 72 to 26 mJ/m(2), which probably allows escape of hyphae from an aqueous environment into air. This is Chaplin-D from Streptomyces coelicolor (strain ATCC BAA-471 / A3(2) / M145).